Here is an 834-residue protein sequence, read N- to C-terminus: ATP-dependent RNA helicase ddx23 (834 aa).

Disordered stretches follow at residues 1 to 245 (MDPP…TQFS) and 322 to 371 (FGGY…GKQI). Residues 10 to 25 (SKRDTKKKDEVNKEQP) show a composition bias toward basic and acidic residues. The segment covering 42–54 (SNPTQEEPTNTLQ) has biased composition (polar residues). Basic and acidic residues-rich tracts occupy residues 70-110 (GLKE…DYRD), 117-164 (GRDR…RRDG), 171-205 (RRRD…RDND), and 231-245 (DIHK…TQFS). A compositionally biased stretch (low complexity) spans 328-362 (NNNNNGNHYNGNIYNNNNNNNNNNNNNNNINNNNN). The Q motif motif lies at 413–441 (RTWQESNLPREILEAIRQLGYEKPSPIQM). The 200-residue stretch at 444 to 643 (IPISLTGRDI…KKYLRRPCTI (200 aa)) folds into the Helicase ATP-binding domain. Residue 457–464 (AETGSGKT) coordinates ATP. Positions 570-573 (DEAD) match the DEAD box motif. Residues 654 to 815 (RIRQTVIFVK…IVPIELLKHP (162 aa)) form the Helicase C-terminal domain. The disordered stretch occupies residues 813-834 (KHPSSQQKHGSSKDHNKSVIFK). Over residues 823–834 (SSKDHNKSVIFK) the composition is skewed to basic and acidic residues.

It belongs to the DEAD box helicase family. DDX23/PRP28 subfamily.

The protein localises to the cytoplasm. Its subcellular location is the nucleus. The catalysed reaction is ATP + H2O = ADP + phosphate + H(+). Probable ATP-dependent RNA helicase which may be involved in mRNA splicing. The protein is ATP-dependent RNA helicase ddx23 (helB2) of Dictyostelium discoideum (Social amoeba).